Reading from the N-terminus, the 473-residue chain is MTKNIGKITQIISAVVDVKFTNNGELPEILNALECYNDKHRIVLEVAQHIGDDTVRCIAMDSMEGLVRGVEVIDTGSPIRIPVGTETLGRIMNVVGEPIDGKGDIKSSNISSIYKPAPDFTNQSTERNILVTGIKVIDLLAPYTKGGKIGLFGGAGVGKTVLIMELINNVAKAHGGYTVFAGVGERTREGNDLYHEMIDSGVINLAEPEKSKVALVYGQMNEPPGARARVALSGLTIAESFRDMNEGQDVLFFVDNIFRFTQAGSEVSALLGRIPSAVGYQPTLATDMGELQERITSTKYGSITSVQAIYVPADDLTDPAPATSFAHLDATTVLSRQIAEFGIYPAVDPLDSNSQVLDPMIVGEEHYSVARQVQQVLQTYKSLQDIITILGMDELSEEDKLTVARARKIQRFLSQPFHVAEVFTGAAGKFVNLADTIAGFKGLVEGKYDDLPEAAFYMVGTIDEAIEKAQTLK.

153–160 (GGAGVGKT) contributes to the ATP binding site.

It belongs to the ATPase alpha/beta chains family. F-type ATPases have 2 components, CF(1) - the catalytic core - and CF(0) - the membrane proton channel. CF(1) has five subunits: alpha(3), beta(3), gamma(1), delta(1), epsilon(1). CF(0) has three main subunits: a(1), b(2) and c(9-12). The alpha and beta chains form an alternating ring which encloses part of the gamma chain. CF(1) is attached to CF(0) by a central stalk formed by the gamma and epsilon chains, while a peripheral stalk is formed by the delta and b chains.

It is found in the cell membrane. The catalysed reaction is ATP + H2O + 4 H(+)(in) = ADP + phosphate + 5 H(+)(out). Functionally, produces ATP from ADP in the presence of a proton gradient across the membrane. The catalytic sites are hosted primarily by the beta subunits. This is ATP synthase subunit beta from Rickettsia africae (strain ESF-5).